The chain runs to 290 residues: Inositol monophosphatase 2 (290 aa).

Mg(2+) is bound by residues Glu83, Asp103, Ile105, and Asp106. Glu83 is a binding site for substrate. Substrate-binding positions include Ile105–Thr108, Gly207–Ser209, Gln226, and Asp233. Asp233 contacts Mg(2+).

The protein belongs to the inositol monophosphatase superfamily. In terms of assembly, homodimer. Requires Mg(2+) as cofactor.

It is found in the cytoplasm. The enzyme catalyses a myo-inositol phosphate + H2O = myo-inositol + phosphate. The protein operates within polyol metabolism; myo-inositol biosynthesis; myo-inositol from D-glucose 6-phosphate: step 2/2. Its function is as follows. Can use myo-inositol monophosphates, scylloinositol 1,4-diphosphate, glucose-1-phosphate, beta-glycerophosphate, and 2'-AMP as substrates. Has been implicated as the pharmacological target for lithium Li(+) action in brain. This is Inositol monophosphatase 2 (Impa2) from Rattus norvegicus (Rat).